A 115-amino-acid chain; its full sequence is Phosphoribosyl-AMP cyclohydrolase (115 aa).

Residue Asp-80 participates in Mg(2+) binding. Cys-81 is a Zn(2+) binding site. The Mg(2+) site is built by Asp-82 and Asp-84. Zn(2+)-binding residues include Cys-97 and Cys-104.

This sequence belongs to the PRA-CH family. Homodimer. Mg(2+) is required as a cofactor. Zn(2+) serves as cofactor.

Its subcellular location is the cytoplasm. The catalysed reaction is 1-(5-phospho-beta-D-ribosyl)-5'-AMP + H2O = 1-(5-phospho-beta-D-ribosyl)-5-[(5-phospho-beta-D-ribosylamino)methylideneamino]imidazole-4-carboxamide. Its pathway is amino-acid biosynthesis; L-histidine biosynthesis; L-histidine from 5-phospho-alpha-D-ribose 1-diphosphate: step 3/9. Catalyzes the hydrolysis of the adenine ring of phosphoribosyl-AMP. In Mycobacterium avium (strain 104), this protein is Phosphoribosyl-AMP cyclohydrolase.